A 430-amino-acid polypeptide reads, in one-letter code: Long-chain specific acyl-CoA dehydrogenase, mitochondrial (430 aa).

The N-terminal 30 residues, 1-30 (MAARLLRGSLRVLGGHRAPRQLPAARCSHS), are a transit peptide targeting the mitochondrion. At K42 the chain carries N6-acetyllysine. S54 bears the Phosphoserine mark. Residues K66 and K81 each carry the N6-acetyllysine; alternate modification. 2 positions are modified to N6-succinyllysine; alternate: K66 and K81. N6-acetyllysine occurs at positions 92 and 95. The residue at position 165 (K165) is an N6-succinyllysine. Residues 170–179 (IAMTEPGAGS) and 203–205 (FIS) contribute to the FAD site. S179 contributes to the substrate binding site. 227–228 (AH) provides a ligand contact to substrate. K240 carries the N6-succinyllysine modification. K254 and K279 each carry N6-acetyllysine; alternate. K254 and K279 each carry N6-succinyllysine; alternate. Substrate-binding positions include Y282 and 289–292 (PQER). E291 acts as the Proton acceptor in catalysis. R317 contacts FAD. An N6-acetyllysine modification is found at K318. K322 bears the N6-acetyllysine; alternate mark. K322 carries the post-translational modification N6-succinyllysine; alternate. Q328 contacts FAD. K358 carries the N6-acetyllysine modification. S362 is subject to Phosphoserine. Position 385–389 (385–389 (QLHGG)) interacts with FAD. 412-413 (GG) is a substrate binding site. Residue 414–416 (TNE) coordinates FAD.

The protein belongs to the acyl-CoA dehydrogenase family. In terms of assembly, homotetramer. FAD serves as cofactor. Acetylation at Lys-318 and Lys-322 in proximity of the cofactor-binding sites strongly reduces catalytic activity. These sites are deacetylated by SIRT3.

It localises to the mitochondrion matrix. It carries out the reaction a long-chain 2,3-saturated fatty acyl-CoA + oxidized [electron-transfer flavoprotein] + H(+) = a long-chain (2E)-enoyl-CoA + reduced [electron-transfer flavoprotein]. The enzyme catalyses hexanoyl-CoA + oxidized [electron-transfer flavoprotein] + H(+) = (2E)-hexenoyl-CoA + reduced [electron-transfer flavoprotein]. The catalysed reaction is octanoyl-CoA + oxidized [electron-transfer flavoprotein] + H(+) = (2E)-octenoyl-CoA + reduced [electron-transfer flavoprotein]. It catalyses the reaction decanoyl-CoA + oxidized [electron-transfer flavoprotein] + H(+) = (2E)-decenoyl-CoA + reduced [electron-transfer flavoprotein]. It carries out the reaction dodecanoyl-CoA + oxidized [electron-transfer flavoprotein] + H(+) = (2E)-dodecenoyl-CoA + reduced [electron-transfer flavoprotein]. The enzyme catalyses tetradecanoyl-CoA + oxidized [electron-transfer flavoprotein] + H(+) = (2E)-tetradecenoyl-CoA + reduced [electron-transfer flavoprotein]. The catalysed reaction is oxidized [electron-transfer flavoprotein] + hexadecanoyl-CoA + H(+) = (2E)-hexadecenoyl-CoA + reduced [electron-transfer flavoprotein]. It catalyses the reaction octadecanoyl-CoA + oxidized [electron-transfer flavoprotein] + H(+) = (2E)-octadecenoyl-CoA + reduced [electron-transfer flavoprotein]. It carries out the reaction eicosanoyl-CoA + oxidized [electron-transfer flavoprotein] + H(+) = (2E)-eicosenoyl-CoA + reduced [electron-transfer flavoprotein]. The enzyme catalyses docosanoyl-CoA + oxidized [electron-transfer flavoprotein] + H(+) = (2E)-docosenoyl-CoA + reduced [electron-transfer flavoprotein]. The catalysed reaction is tetracosanoyl-CoA + oxidized [electron-transfer flavoprotein] + H(+) = (2E)-tetracosenoyl-CoA + reduced [electron-transfer flavoprotein]. It catalyses the reaction (5E)-tetradecenoyl-CoA + oxidized [electron-transfer flavoprotein] + H(+) = (2E,5E)-tetradecadienoyl-CoA + reduced [electron-transfer flavoprotein]. It carries out the reaction (5Z)-tetradecenoyl-CoA + oxidized [electron-transfer flavoprotein] + H(+) = (2E,5Z)-tetradecadienoyl-CoA + reduced [electron-transfer flavoprotein]. The enzyme catalyses oxidized [electron-transfer flavoprotein] + (9Z)-octadecenoyl-CoA + H(+) = (2E,9Z)-octadecadienoyl-CoA + reduced [electron-transfer flavoprotein]. It functions in the pathway lipid metabolism; mitochondrial fatty acid beta-oxidation. Its function is as follows. Long-chain specific acyl-CoA dehydrogenase is one of the acyl-CoA dehydrogenases that catalyze the first step of mitochondrial fatty acid beta-oxidation, an aerobic process breaking down fatty acids into acetyl-CoA and allowing the production of energy from fats. The first step of fatty acid beta-oxidation consists in the removal of one hydrogen from C-2 and C-3 of the straight-chain fatty acyl-CoA thioester, resulting in the formation of trans-2-enoyl-CoA. Among the different mitochondrial acyl-CoA dehydrogenases, long-chain specific acyl-CoA dehydrogenase can act on saturated and unsaturated acyl-CoAs with 6 to 24 carbons with a preference for 8 to 18 carbons long primary chains. The sequence is that of Long-chain specific acyl-CoA dehydrogenase, mitochondrial from Homo sapiens (Human).